We begin with the raw amino-acid sequence, 507 residues long: Rho GTPase-activating protein 19 (507 aa).

Positions 112–305 (APLTEEGIAQ…FMIKHSQKLF (194 aa)) constitute a Rho-GAP domain. Disordered stretches follow at residues 344-371 (FLKH…QQHT), 400-419 (KNTP…KKHV), and 483-507 (DLQI…ETSI). Positions 355 to 369 (SSPSSSTSLQEQTQQ) are enriched in low complexity. Residues 400–413 (KNTPRTPVSDTQVP) are compositionally biased toward polar residues. Over residues 483 to 492 (DLQIRKEASS) the composition is skewed to basic and acidic residues.

Its function is as follows. GTPase activator for the Rho-type GTPases by converting them to an inactive GDP-bound state. The chain is Rho GTPase-activating protein 19 (arhgap19) from Xenopus laevis (African clawed frog).